Here is a 388-residue protein sequence, read N- to C-terminus: Sex-determination protein fem-3 (388 aa).

Repeat copies occupy residues 7–10 (SDDV), 110–113 (ITRF), 141–144 (ITRF), 234–237 (YHTT), 284–287 (YHTT), and 371–374 (SDDV).

Component of a complex containing fem-1, fem-2 and fem-3. Interacts with fem-1 and fem-2 (via N-terminus). Part of a E3 ubiquitin-protein ligase complex, at least composed of cul-2, elc-1, tra-1, fem-1, fem-2 and fem-3; mediates the ubiquitination and subsequent proteasomal degradation of tra-1. Interacts with tra-1. Interacts with sel-10. Interacts with tra-2.

Its function is as follows. Required for male development. In XO (male) animals, fem-3 directs male differentiation in all tissues. In XX (hermaphrodite) animals, it specifies the first 80 or so germ cells to be sperm. Negatively regulates male development when bound to tra-2. Together with fem-2 associates with the CBC(fem-1) E3 ubiquitin-protein ligase complex which mediates the ubiquitination and subsequent proteasomal degradation of tra-1. The polypeptide is Sex-determination protein fem-3 (fem-3) (Caenorhabditis elegans).